The primary structure comprises 393 residues: N-acyl-phosphatidylethanolamine-hydrolyzing phospholipase D (393 aa).

At methionine 1 the chain carries N-acetylmethionine. Residues 1-16 (MDENESNQSLMTSSQY) are compositionally biased toward polar residues. The tract at residues 1-40 (MDENESNQSLMTSSQYPKEAVRKRQNSARNSGGSDSSRFS) is disordered. Residues histidine 185 and histidine 187 each contribute to the Zn(2+) site. Position 188 (tyrosine 188) interacts with an N-acyl-1,2-diacyl-sn-glycero-3-phosphoethanolamine. 3 residues coordinate Zn(2+): aspartate 189, histidine 190, and histidine 253. 2 residues coordinate deoxycholate: lysine 256 and methionine 260. A Zn(2+)-binding site is contributed by aspartate 284. Histidine 321 contributes to the an N-acyl-1,2-diacyl-sn-glycero-3-phosphoethanolamine binding site. Histidine 343 contacts Zn(2+). Residue alanine 348 coordinates deoxycholate.

It belongs to the NAPE-PLD family. In terms of assembly, homodimer. Bile acids promote the assembly of inactive monomers into an active dimer and enable catalysis. Zn(2+) serves as cofactor. In terms of tissue distribution, widely expressed. Highest expression in brain, kidney and testis (at protein level). Expressed in adipose tissue (at protein level).

It is found in the golgi apparatus membrane. Its subcellular location is the early endosome membrane. It localises to the nucleus envelope. The protein resides in the nucleus. The protein localises to the nucleoplasm. The enzyme catalyses an N-acyl-1,2-diacyl-sn-glycero-3-phosphoethanolamine + H2O = an N-acylethanolamine + a 1,2-diacyl-sn-glycero-3-phosphate + H(+). It carries out the reaction N-butanoyl-1-hexadecanoyl-2-(9Z,12Z-octadecadienoyl)-sn-glycero-3-phosphoethanolamine + H2O = N-butanoyl ethanolamine + 1-hexadecanoyl-2-(9Z,12Z-octadecadienoyl)-sn-glycero-3-phosphate + H(+). It catalyses the reaction N-hexanoyl-1-hexadecanoyl-2-(9Z,12Z-octadecadienoyl)-sn-glycero-3-phosphoethanolamine + H2O = N-hexanoyl ethanolamine + 1-hexadecanoyl-2-(9Z,12Z-octadecadienoyl)-sn-glycero-3-phosphate + H(+). The catalysed reaction is N-octanoyl-1-hexadecanoyl-2-(9Z,12Z-octadecadienoyl)-sn-glycero-3-phosphoethanolamine + H2O = N-octanoyl ethanolamine + 1-hexadecanoyl-2-(9Z,12Z-octadecadienoyl)-sn-glycero-3-phosphate + H(+). The enzyme catalyses N-decanoyl-1-hexadecanoyl-2-(9Z,12Z-octadecadienoyl)-sn-glycero-3-phosphoethanolamine + H2O = N-decanoyl ethanolamine + 1-hexadecanoyl-2-(9Z,12Z-octadecadienoyl)-sn-glycero-3-phosphate + H(+). It carries out the reaction N-dodecanoyl-1,2-di-(9Z-octadecenoyl)-sn-glycero-3-phosphoethanolamine + H2O = N-dodecanoylethanolamine + 1,2-di-(9Z-octadecenoyl)-sn-glycero-3-phosphate + H(+). It catalyses the reaction N-tetradecanoyl-1,2-di-(9Z-octadecenoyl)-sn-glycero-3-phosphoethanolamine + H2O = N-tetradecanoylethanolamine + 1,2-di-(9Z-octadecenoyl)-sn-glycero-3-phosphate + H(+). The catalysed reaction is N-hexadecanoyl-1,2-di-(9Z-octadecenoyl)-sn-glycero-3-phosphoethanolamine + H2O = N-hexadecanoylethanolamine + 1,2-di-(9Z-octadecenoyl)-sn-glycero-3-phosphate + H(+). The enzyme catalyses N,1-dihexadecanoyl-2-(9Z,12Z-octadecadienoyl)-sn-glycero-3-phosphoethanolamine + H2O = 1-hexadecanoyl-2-(9Z,12Z-octadecadienoyl)-sn-glycero-3-phosphate + N-hexadecanoylethanolamine + H(+). It carries out the reaction N-octadecanoyl-1,2-di-(9Z-octadecenoyl)-sn-glycero-3-phosphoethanolamine + H2O = N-octadecanoyl ethanolamine + 1,2-di-(9Z-octadecenoyl)-sn-glycero-3-phosphate + H(+). It catalyses the reaction N,1,2-tri-(9Z-octadecenoyl)-sn-glycero-3-phosphoethanolamine + H2O = N-(9Z-octadecenoyl) ethanolamine + 1,2-di-(9Z-octadecenoyl)-sn-glycero-3-phosphate + H(+). The catalysed reaction is N-(5Z,8Z,11Z,14Z-eicosatetraenoyl)-1,2-diacyl-sn-glycero-3-phosphoethanolamine + H2O = N-(5Z,8Z,11Z,14Z-eicosatetraenoyl)-ethanolamine + a 1,2-diacyl-sn-glycero-3-phosphate + H(+). The enzyme catalyses N-(5Z,8Z,11Z,14Z-eicosatetraenoyl)-1,2-di-(9Z-octadecenoyl)-sn-glycero-3-phosphoethanolamine + H2O = N-(5Z,8Z,11Z,14Z-eicosatetraenoyl)-ethanolamine + 1,2-di-(9Z-octadecenoyl)-sn-glycero-3-phosphate + H(+). It carries out the reaction 1-O-(1Z-octadecenoyl)-2-(9Z-octadecenoyl)-sn-glycero-3-phospho-N-hexadecanoyl-ethanolamine + H2O = 1-O-(1Z-octadecenoyl)-2-(9Z-octadecenoyl)-sn-glycero-3-phosphate + N-hexadecanoylethanolamine + H(+). It catalyses the reaction N,1-diacyl-sn-glycero-3-phosphoethanolamine + H2O = an N-acylethanolamine + a 1-acyl-sn-glycero-3-phosphate + H(+). The catalysed reaction is N,1-dihexadecanoyl-sn-glycero-3-phosphoethanolamine + H2O = N-hexadecanoylethanolamine + 1-hexadecanoyl-sn-glycero-3-phosphate + H(+). The enzyme catalyses N-(5Z,8Z,11Z,14Z-eicosatetraenoyl)-1-(9Z-octadecenoyl)-sn-glycero-3-phosphoethanolamine + H2O = N-(5Z,8Z,11Z,14Z-eicosatetraenoyl)-ethanolamine + 1-(9Z-octadecenoyl)-sn-glycero-3-phosphate + H(+). Activated by divalent cations. Activated by bile acids. Functionally, D-type phospholipase that hydrolyzes N-acyl-phosphatidylethanolamines (NAPEs) to produce bioactive N-acylethanolamines/fatty acid ethanolamides (NAEs/FAEs) and phosphatidic acid. Cleaves the terminal phosphodiester bond of diacyl- and alkenylacyl-NAPEs, primarily playing a role in the generation of long-chain saturated and monounsaturated NAEs in the brain. May control NAPE homeostasis in dopaminergic neuron membranes and regulate neuron survival, partly through RAC1 activation. As a regulator of lipid metabolism in the adipose tissue, mediates the crosstalk between adipocytes, gut microbiota and immune cells to control body temperature and weight. In particular, regulates energy homeostasis by promoting cold-induced brown or beige adipocyte differentiation program to generate heat from fatty acids and glucose. Has limited D-type phospholipase activity toward N-acyl lyso-NAPEs. The polypeptide is N-acyl-phosphatidylethanolamine-hydrolyzing phospholipase D (NAPEPLD) (Pongo abelii (Sumatran orangutan)).